A 529-amino-acid chain; its full sequence is Bifunctional purine biosynthesis protein PurH (529 aa).

The MGS-like domain occupies 1-148 (MQQRRPVRRA…KNHKDVAIVV (148 aa)).

The protein belongs to the PurH family.

It catalyses the reaction (6R)-10-formyltetrahydrofolate + 5-amino-1-(5-phospho-beta-D-ribosyl)imidazole-4-carboxamide = 5-formamido-1-(5-phospho-D-ribosyl)imidazole-4-carboxamide + (6S)-5,6,7,8-tetrahydrofolate. The enzyme catalyses IMP + H2O = 5-formamido-1-(5-phospho-D-ribosyl)imidazole-4-carboxamide. The protein operates within purine metabolism; IMP biosynthesis via de novo pathway; 5-formamido-1-(5-phospho-D-ribosyl)imidazole-4-carboxamide from 5-amino-1-(5-phospho-D-ribosyl)imidazole-4-carboxamide (10-formyl THF route): step 1/1. It participates in purine metabolism; IMP biosynthesis via de novo pathway; IMP from 5-formamido-1-(5-phospho-D-ribosyl)imidazole-4-carboxamide: step 1/1. The polypeptide is Bifunctional purine biosynthesis protein PurH (Salmonella typhi).